The primary structure comprises 672 residues: Penicillin-binding protein activator LpoA (672 aa).

Residues M1 to G26 form the signal peptide. Residue C27 is the site of N-palmitoyl cysteine attachment. The S-diacylglycerol cysteine moiety is linked to residue C27. The interval A298–P336 is disordered. The span at Q305 to A322 shows a compositional bias: polar residues. Residues Q327 to P336 show a composition bias toward low complexity.

The protein belongs to the LpoA family. Interacts with PBP1a.

It localises to the cell outer membrane. Functionally, regulator of peptidoglycan synthesis that is essential for the function of penicillin-binding protein 1A (PBP1a). This chain is Penicillin-binding protein activator LpoA, found in Pectobacterium parmentieri (strain WPP163) (Pectobacterium wasabiae (strain WPP163)).